An 802-amino-acid chain; its full sequence is Leucine--tRNA ligase (802 aa).

A 'HIGH' region motif is present at residues 40-51 (PYPSGAGLHVGH). Positions 576 to 580 (KMSKS) match the 'KMSKS' region motif. Lys-579 lines the ATP pocket.

The protein belongs to the class-I aminoacyl-tRNA synthetase family.

It is found in the cytoplasm. It catalyses the reaction tRNA(Leu) + L-leucine + ATP = L-leucyl-tRNA(Leu) + AMP + diphosphate. In Bacillus cereus (strain ATCC 10987 / NRS 248), this protein is Leucine--tRNA ligase.